The sequence spans 324 residues: NADH-quinone oxidoreductase subunit H (324 aa).

8 helical membrane-spanning segments follow: residues 11-31, 81-101, 114-134, 154-174, 186-206, 237-257, 264-284, and 304-324; these read ILITVGKAIVILLVVVTCGAF, VIFTLAPMIAFTSMLIAFAIV, IGILFFLMMAGLAVYAVLFAG, VSYEVFIGLSLMGVVAQAGSF, LWNVIPQFFGFITFAIAGVAV, FFVGEYIGIVTVSALMVTLFF, ILPPFVWFALKTGFFMMMFIL, and VCLPITLLNLLATAAVILYNA.

Belongs to the complex I subunit 1 family. In terms of assembly, NDH-1 is composed of 13 different subunits. Subunits NuoA, H, J, K, L, M, N constitute the membrane sector of the complex.

It is found in the cell inner membrane. The enzyme catalyses a quinone + NADH + 5 H(+)(in) = a quinol + NAD(+) + 4 H(+)(out). NDH-1 shuttles electrons from NADH, via FMN and iron-sulfur (Fe-S) centers, to quinones in the respiratory chain. The immediate electron acceptor for the enzyme in this species is believed to be ubiquinone. Couples the redox reaction to proton translocation (for every two electrons transferred, four hydrogen ions are translocated across the cytoplasmic membrane), and thus conserves the redox energy in a proton gradient. This subunit may bind ubiquinone. The protein is NADH-quinone oxidoreductase subunit H of Pectobacterium carotovorum subsp. carotovorum (strain PC1).